A 1218-amino-acid polypeptide reads, in one-letter code: DNA polymerase subunit gamma-1 (1218 aa).

Residues 31 to 50 (LDPVPSDGRPPSQMPSSENG) are disordered. An Exo I motif is present at residues 179–183 (VFDVE). Residue D181 is the Exonuclease activity of the active site. An Exo II motif is present at residues 250–258 (VGHNVSFDR). Residue S289 participates in DNA binding. The short motif at 378 to 386 (YCARDVWAT) is the Exo III element. Residues 484–524 (KKVKKPASASKLPIEGAGPFGDPMDQEDPGPPSEEEELQRS) form a disordered region. An accessory-interacting determinant region spans residues 492-553 (ASKLPIEGAG…RPQHLPGHPG (62 aa)). Over residues 507–520 (MDQEDPGPPSEEEE) the composition is skewed to acidic residues. R561 lines the RNA pocket. S575 lines the DNA pocket. RNA contacts are provided by H733, G742, and K747. K785 and T828 together coordinate DNA. Residues 837–843 (TWLTASN) are trigger loop. Residues S842 and R848 each contribute to the RNA site. The Pol A signature appears at 866–875 (VGADVDSQEL). Residues D869, V870, S872, E874, R922, K926, and Y930 each contribute to the a 2'-deoxyribonucleoside 5'-triphosphate site. 2 residues coordinate Mg(2+): D869 and V870. The Pol B motif lies at 922–937 (REHAKIFNYGRIYGAG). Residues T1073 and S1074 each contribute to the DNA site. The short motif at 1113–1120 (HDEVRYLV) is the Pol C element. Position 1114 (D1114) interacts with a 2'-deoxyribonucleoside 5'-triphosphate. D1114 contributes to the Mg(2+) binding site.

It belongs to the DNA polymerase type-A family. Heterotrimer composed of a catalytic subunit and a homodimer of accessory subunits (POLG:POLG2). Interacts with TTC3. Interacts with LIG3. It depends on Mg(2+) as a cofactor.

Its subcellular location is the mitochondrion. It is found in the mitochondrion matrix. It localises to the mitochondrion nucleoid. The enzyme catalyses DNA(n) + a 2'-deoxyribonucleoside 5'-triphosphate = DNA(n+1) + diphosphate. It catalyses the reaction a 3'-end 2'-deoxyribonucleotidyl-deoxyribonucleotide-DNA + H2O = a 3'-end 2'-deoxyribonucleotide-DNA + a 2'-deoxyribonucleoside 5'-phosphate + H(+). It carries out the reaction a 5'-end 2'-deoxyribose-2'-deoxyribonucleotide-DNA = (2E,4S)-4-hydroxypenten-2-al-5-phosphate + a 5'-end 5'-phospho-2'-deoxyribonucleoside-DNA + H(+). Its activity is regulated as follows. Inhibited by dideoxynucleotides such as antiviral agent zalcitabine. In terms of biological role, catalytic subunit of DNA polymerase gamma solely responsible for replication of mitochondrial DNA (mtDNA). Replicates both heavy and light strands of the circular mtDNA genome using a single-stranded DNA template, RNA primers and the four deoxyribonucleoside triphosphates as substrates. Has 5' -&gt; 3' polymerase activity. Functionally interacts with TWNK and SSBP1 at the replication fork to form a highly processive replisome, where TWNK unwinds the double-stranded DNA template prior to replication and SSBP1 covers the parental heavy strand to enable continuous replication of the entire mitochondrial genome. A single nucleotide incorporation cycle includes binding of the incoming nucleotide at the insertion site, a phosphodiester bond formation reaction that extends the 3'-end of the primer DNA, and translocation of the primer terminus to the post-insertion site. After completing replication of a mtDNA strand, mediates 3' -&gt; 5' exonucleolytic degradation at the nick to enable proper ligation. Highly accurate due to high nucleotide selectivity and 3' -&gt; 5' exonucleolytic proofreading. Proficiently corrects base substitutions, single-base additions and deletions in non-repetitive sequences and short repeats, but displays lower proofreading activity when replicating longer homopolymeric stretches. Exerts exonuclease activity toward single-stranded DNA and double-stranded DNA containing 3'-terminal mispairs. When a misincorporation occurs, transitions from replication to a pro-nucleolytic editing mode and removes the missincorporated nucleoside in the exonuclease active site. Proceeds via an SN2 nucleolytic mechanism in which Asp-198 catalyzes phosphodiester bond hydrolysis and Glu-200 stabilizes the leaving group. As a result the primer strand becomes one nucleotide shorter and is positioned in the post-insertion site, ready to resume DNA synthesis. Exerts 5'-deoxyribose phosphate (dRP) lyase activity and mediates repair-associated mtDNA synthesis (gap filling) in base-excision repair pathway. Catalyzes the release of the 5'-terminal 2-deoxyribose-5-phosphate sugar moiety from incised apurinic/apyrimidinic (AP) sites to produce a substrate for DNA ligase. The dRP lyase reaction does not require divalent metal ions and likely proceeds via a Schiff base intermediate in a beta-elimination reaction mechanism. The sequence is that of DNA polymerase subunit gamma-1 from Mus musculus (Mouse).